Reading from the N-terminus, the 283-residue chain is Pantothenate synthetase (283 aa).

30-37 lines the ATP pocket; sequence MGALHEGH. H37 (proton donor) is an active-site residue. Residue Q61 participates in (R)-pantoate binding. Residue Q61 coordinates beta-alanine. 149–152 serves as a coordination point for ATP; it reads GEKD. Q155 is a (R)-pantoate binding site. ATP contacts are provided by residues L178 and 186–189; that span reads RSSR.

Belongs to the pantothenate synthetase family. As to quaternary structure, homodimer.

The protein resides in the cytoplasm. The enzyme catalyses (R)-pantoate + beta-alanine + ATP = (R)-pantothenate + AMP + diphosphate + H(+). It participates in cofactor biosynthesis; (R)-pantothenate biosynthesis; (R)-pantothenate from (R)-pantoate and beta-alanine: step 1/1. Its function is as follows. Catalyzes the condensation of pantoate with beta-alanine in an ATP-dependent reaction via a pantoyl-adenylate intermediate. The chain is Pantothenate synthetase from Christiangramia forsetii (strain DSM 17595 / CGMCC 1.15422 / KT0803) (Gramella forsetii).